The sequence spans 341 residues: UDP-3-O-acylglucosamine N-acyltransferase (341 aa).

The active-site Proton acceptor is His255.

It belongs to the transferase hexapeptide repeat family. LpxD subfamily. In terms of assembly, homotrimer.

It catalyses the reaction a UDP-3-O-[(3R)-3-hydroxyacyl]-alpha-D-glucosamine + a (3R)-hydroxyacyl-[ACP] = a UDP-2-N,3-O-bis[(3R)-3-hydroxyacyl]-alpha-D-glucosamine + holo-[ACP] + H(+). It participates in bacterial outer membrane biogenesis; LPS lipid A biosynthesis. In terms of biological role, catalyzes the N-acylation of UDP-3-O-acylglucosamine using 3-hydroxyacyl-ACP as the acyl donor. Is involved in the biosynthesis of lipid A, a phosphorylated glycolipid that anchors the lipopolysaccharide to the outer membrane of the cell. The polypeptide is UDP-3-O-acylglucosamine N-acyltransferase (Granulibacter bethesdensis (strain ATCC BAA-1260 / CGDNIH1)).